We begin with the raw amino-acid sequence, 278 residues long: Digeranylgeranylglyceryl phosphate synthase (278 aa).

The next 8 helical transmembrane spans lie at leucine 12–phenylalanine 32, leucine 34–glycine 54, leucine 91–valine 111, isoleucine 129–alanine 149, isoleucine 153–isoleucine 173, phenylalanine 204–isoleucine 224, tyrosine 225–valine 245, and serine 257–phenylalanine 277.

The protein belongs to the UbiA prenyltransferase family. DGGGP synthase subfamily. Requires Mg(2+) as cofactor.

Its subcellular location is the cell membrane. It carries out the reaction sn-3-O-(geranylgeranyl)glycerol 1-phosphate + (2E,6E,10E)-geranylgeranyl diphosphate = 2,3-bis-O-(geranylgeranyl)-sn-glycerol 1-phosphate + diphosphate. The protein operates within membrane lipid metabolism; glycerophospholipid metabolism. Functionally, prenyltransferase that catalyzes the transfer of the geranylgeranyl moiety of geranylgeranyl diphosphate (GGPP) to the C2 hydroxyl of (S)-3-O-geranylgeranylglyceryl phosphate (GGGP). This reaction is the second ether-bond-formation step in the biosynthesis of archaeal membrane lipids. The polypeptide is Digeranylgeranylglyceryl phosphate synthase (Methanococcus maripaludis (strain C7 / ATCC BAA-1331)).